Reading from the N-terminus, the 116-residue chain is Ino eighty subunit 4 (116 aa).

Over residues 1 to 15 (MSQESSVLSESQEQL) the composition is skewed to low complexity. Disordered stretches follow at residues 1–40 (MSQE…PVLP) and 70–116 (EERQ…GLDS). The segment covering 84–108 (KGSDDKATRKKEPADEDPEVKQLEK) has biased composition (basic and acidic residues).

In terms of assembly, component of the chromatin-remodeling INO80 complex, at least composed of ARP4, ARP5, ARP8, RVB1, RVB2, TAF14, NHP10, IES1, IES3, IES4, IES6, ACT1, IES2, IES5 and INO80.

Its subcellular location is the nucleus. This Saccharomyces cerevisiae (strain ATCC 204508 / S288c) (Baker's yeast) protein is Ino eighty subunit 4 (IES4).